A 239-amino-acid polypeptide reads, in one-letter code: Ribonuclease PH (239 aa).

Phosphate-binding positions include arginine 87 and glycine 125–arginine 127.

It belongs to the RNase PH family. As to quaternary structure, homohexameric ring arranged as a trimer of dimers.

It catalyses the reaction tRNA(n+1) + phosphate = tRNA(n) + a ribonucleoside 5'-diphosphate. In terms of biological role, phosphorolytic 3'-5' exoribonuclease that plays an important role in tRNA 3'-end maturation. Removes nucleotide residues following the 3'-CCA terminus of tRNAs; can also add nucleotides to the ends of RNA molecules by using nucleoside diphosphates as substrates, but this may not be physiologically important. Probably plays a role in initiation of 16S rRNA degradation (leading to ribosome degradation) during starvation. The sequence is that of Ribonuclease PH from Syntrophomonas wolfei subsp. wolfei (strain DSM 2245B / Goettingen).